Consider the following 190-residue polypeptide: Adenylate kinase (190 aa).

An ATP-binding site is contributed by 12-17 (GSGKTT). An NMP region spans residues 34–63 (STGDLLREEVASGSEYGKTIDSFISKGNLV). Residues threonine 35, arginine 40, 61-63 (NLV), 88-91 (GYPR), and glutamine 95 each bind AMP. An LID region spans residues 130-136 (GRARGAD). An ATP-binding site is contributed by arginine 131. The AMP site is built by arginine 133 and arginine 145. ATP is bound at residue arginine 173.

The protein belongs to the adenylate kinase family. As to quaternary structure, monomer.

The protein localises to the cytoplasm. The catalysed reaction is AMP + ATP = 2 ADP. The protein operates within purine metabolism; AMP biosynthesis via salvage pathway; AMP from ADP: step 1/1. Functionally, catalyzes the reversible transfer of the terminal phosphate group between ATP and AMP. Plays an important role in cellular energy homeostasis and in adenine nucleotide metabolism. This chain is Adenylate kinase, found in Helicobacter hepaticus (strain ATCC 51449 / 3B1).